The sequence spans 779 residues: MEEEARPAAGAGEAATPARETPPAAPAQARAASGGVPESAPEPKRRQLGTLLQPTVNKFSLRVFGSHKAVEIEQERVKSAGAWIIHPYSDFRFYWDLIMLLLMVGNLIVLPVGITFFKEENSPPWIVFNVLSDTFFLLDLVLNFRTGIVVEEGAEILLAPRAIRTRYLRTWFLVDLISSIPVDYIFLVVELEPRLDAEVYKTARALRIVRFTKILSLLRLLRLSRLIRYIHQWEEIFHMTYDLASAVVRIFNLIGMMLLLCHWDGCLQFLVPMLQDFPSDCWVSMNRMVNHSWGRQYSHALFKAMSHMLCIGYGQQAPVGMPDVWLTMLSMIVGATCYAMFIGHATALIQSLDSSRRQYQEKYKQVEQYMSFHKLPADTRQRIHEYYEHRYQGKMFDEESILGELSEPLREEIINFTCRGLVAHMPLFAHADPSFVTAVLTKLRFEVFQPGDLVVREGSVGRKMYFIQHGLLSVLARGARDTRLTDGSYFGEICLLTRGRRTASVRADTYCRLYSLSVDHFNAVLEEFPMMRRAFETVAMDRLRRIGKKNSILQRKRSEPSPGSSGGVMEQHLVQHDRDMARGVRGLAPGTGARLSGKPVLWEPLVHAPLQAAAVTSNVAIALTHQRGPLPLSPDSPATLLARSARRSAGSPASPLVPVRAGPLLARGPWASTSRLPAPPARTLHASLSRTGRSQVSLLGPPPGGGARRLGPRGRPLSASQPSLPQRATGDGSPRRKGSGSERLPPSGLLAKPPGTVQPPRSSVPEPVTPRGPQISANM.

Positions 1 to 47 are disordered; the sequence is MEEEARPAAGAGEAATPARETPPAAPAQARAASGGVPESAPEPKRRQ. Over 1 to 96 the chain is Cytoplasmic; sequence MEEEARPAAG…PYSDFRFYWD (96 aa). A compositionally biased stretch (low complexity) spans 7 to 32; that stretch reads PAAGAGEAATPARETPPAAPAQARAA. An involved in subunit assembly region spans residues 45–90; that stretch reads RRQLGTLLQPTVNKFSLRVFGSHKAVEIEQERVKSAGAWIIHPYSD. Residues 97–117 traverse the membrane as a helical segment; that stretch reads LIMLLLMVGNLIVLPVGITFF. Over 118–123 the chain is Extracellular; sequence KEENSP. Residues 124-144 traverse the membrane as a helical segment; that stretch reads PWIVFNVLSDTFFLLDLVLNF. Over 145–170 the chain is Cytoplasmic; that stretch reads RTGIVVEEGAEILLAPRAIRTRYLRT. The chain crosses the membrane as a helical span at residues 171 to 191; that stretch reads WFLVDLISSIPVDYIFLVVEL. Residues 192–200 are Extracellular-facing; that stretch reads EPRLDAEVY. A helical; Voltage-sensor transmembrane segment spans residues 201-221; the sequence is KTARALRIVRFTKILSLLRLL. At 222–252 the chain is on the cytoplasmic side; sequence RLSRLIRYIHQWEEIFHMTYDLASAVVRIFN. Residues 253 to 273 traverse the membrane as a helical segment; the sequence is LIGMMLLLCHWDGCLQFLVPM. The Extracellular portion of the chain corresponds to 274–296; sequence LQDFPSDCWVSMNRMVNHSWGRQ. The N-linked (GlcNAc...) asparagine glycan is linked to Asn290. Residues 297-318 constitute an intramembrane region (pore-forming); sequence YSHALFKAMSHMLCIGYGQQAP. Topologically, residues 319-328 are extracellular; it reads VGMPDVWLTM. Residues 329 to 349 form a helical membrane-spanning segment; that stretch reads LSMIVGATCYAMFIGHATALI. The Cytoplasmic portion of the chain corresponds to 350 to 779; sequence QSLDSSRRQY…PRGPQISANM (430 aa). The interaction with KCTD3 stretch occupies residues 353 to 779; sequence DSSRRQYQEK…PRGPQISANM (427 aa). The 3',5'-cyclic AMP site is built by Gly491, Glu492, Cys494, Arg501, Thr502, Arg542, and Arg545. The segment at 549 to 569 is disordered; it reads KNSILQRKRSEPSPGSSGGVM. Phosphoserine is present on Ser633. Positions 687–697 are enriched in polar residues; sequence SLSRTGRSQVS. A disordered region spans residues 687–779; sequence SLSRTGRSQV…PRGPQISANM (93 aa).

Belongs to the potassium channel HCN family. In terms of assembly, homotetramer. The potassium channel is composed of a homo- or heterotetrameric complex of pore-forming subunits. Interacts with HCN1. Interacts with KCTD3; this interaction increases cell surface expression and current density of this channel. Interacts with PEX5L. In terms of tissue distribution, detected in hypothalamus, amygdala, olfactory bulb, hippocampus and retina (at protein level). Highly expressed in brain and heart, in particular in ventricle, atrium and in sinoatrial node (SAN). Detected at low levels in skeletal muscle and lung. Expressed in DRG neurons.

The protein resides in the cell membrane. The catalysed reaction is K(+)(in) = K(+)(out). It carries out the reaction Na(+)(in) = Na(+)(out). With respect to regulation, unlike HCN2 and HCN4, HCN3 is insensitive to cyclic nucleotides, such as cAMP or cGMP. This lack of sensitivity of HCN3, despite harboring a functional cyclic nucleotide-binding domain (CNBD), may be explained by its shorter C-terminal sequence, which may alter the normal autoinhibition of the channel. Inhibited by Cs(1+) and ivabradine. Phosphatidylinositol-4,5-bisphosphate (PIP(2)) shifts HCN3 activation to more depolarized potentials and accelerated activation kinetics. In terms of biological role, hyperpolarization-activated ion channel that are permeable to sodium and potassium ions, with an about 3:1 preference for potassium ions. Contributes to the native pacemaker currents in heart (If) and in neurons (Ih). In particular, plays a pivotal role in maintaining excitability and promoting rhythmic burst firing within hypothalamic nuclei. Exerts a significant influence on the configuration of the cardiac action potential waveform. Does not appear to play a prominent role in the processing of acute, neuropathic, or inflammatory pain. The protein is Potassium/sodium hyperpolarization-activated cyclic nucleotide-gated channel 3 (Hcn3) of Mus musculus (Mouse).